A 252-amino-acid polypeptide reads, in one-letter code: 5-oxoprolinase subunit A 1 (252 aa).

Belongs to the LamB/PxpA family. In terms of assembly, forms a complex composed of PxpA, PxpB and PxpC.

The enzyme catalyses 5-oxo-L-proline + ATP + 2 H2O = L-glutamate + ADP + phosphate + H(+). Functionally, catalyzes the cleavage of 5-oxoproline to form L-glutamate coupled to the hydrolysis of ATP to ADP and inorganic phosphate. This Pseudomonas putida (strain ATCC 47054 / DSM 6125 / CFBP 8728 / NCIMB 11950 / KT2440) protein is 5-oxoprolinase subunit A 1.